The primary structure comprises 538 residues: BTB/POZ domain-containing protein 6 (538 aa).

A signal peptide spans 1-17 (MLLPLACLHGRVAQCLT). Disordered regions lie at residues 29–53 (PRRG…PPAK) and 76–115 (AAVG…SPGW). Over residues 35–53 (ARGAASTGAEAAPAAPPAK) the composition is skewed to low complexity. The segment covering 85–103 (RSPPSAPAPAPPPPAPAPP) has biased composition (pro residues). In terms of domain architecture, BTB spans 136-206 (ADVHFVVGPP…MYSDEIDLEA (71 aa)).

In terms of tissue distribution, expressed in lens.

The protein resides in the cytoplasm. In terms of biological role, adapter protein for the cul3 E3 ubiquitin-protein ligase complex. Involved in late neuronal development and muscle formation. The sequence is that of BTB/POZ domain-containing protein 6 from Homo sapiens (Human).